We begin with the raw amino-acid sequence, 40 residues long: Cytolysin EnT (40 aa).

The segment at 3–12 is plays an important role in the hemolytic activity; that stretch reads ALAGTIIEGA. The interval 11–30 is N-terminal region; the sequence is GASLTFSVLTTILDALGSVS.

Belongs to the actinoporin family. Sea anemone subfamily. As to quaternary structure, octamer or nonamer in membranes. Monomer in the soluble state.

It is found in the secreted. It localises to the nematocyst. The protein resides in the target cell membrane. Pore-forming protein that forms cations-selective hydrophilic pores of around 1 nm and causes cytolysis. Pore formation is a multi-step process that involves specific recognition of membrane sphingomyelin (but neither cholesterol nor phosphatidylcholine) using aromatic rich region and adjacent phosphocholine (POC) binding site, firm binding to the membrane (mainly driven by hydrophobic interactions) accompanied by the transfer of the N-terminal region to the lipid-water interface and finally pore formation after oligomerization of monomers. This toxin shows hemolytic activities. The protein is Cytolysin EnT of Entacmaea quadricolor (Bubble-tip anemone).